The chain runs to 290 residues: ATP synthase gamma chain (290 aa).

This sequence belongs to the ATPase gamma chain family. F-type ATPases have 2 components, CF(1) - the catalytic core - and CF(0) - the membrane proton channel. CF(1) has five subunits: alpha(3), beta(3), gamma(1), delta(1), epsilon(1). CF(0) has three main subunits: a, b and c.

The protein localises to the cell membrane. Produces ATP from ADP in the presence of a proton gradient across the membrane. The gamma chain is believed to be important in regulating ATPase activity and the flow of protons through the CF(0) complex. The protein is ATP synthase gamma chain of Buchnera aphidicola subsp. Diuraphis noxia.